A 493-amino-acid chain; its full sequence is Glutamate--tRNA ligase (493 aa).

The 'HIGH' region signature appears at 10-20 (PSPTGDPHVGT). The 'KMSKS' region motif lies at 251–255 (KLSKR). Lysine 254 contributes to the ATP binding site.

This sequence belongs to the class-I aminoacyl-tRNA synthetase family. Glutamate--tRNA ligase type 1 subfamily. Monomer.

The protein localises to the cytoplasm. The enzyme catalyses tRNA(Glu) + L-glutamate + ATP = L-glutamyl-tRNA(Glu) + AMP + diphosphate. Catalyzes the attachment of glutamate to tRNA(Glu) in a two-step reaction: glutamate is first activated by ATP to form Glu-AMP and then transferred to the acceptor end of tRNA(Glu). In Pseudomonas putida (strain ATCC 700007 / DSM 6899 / JCM 31910 / BCRC 17059 / LMG 24140 / F1), this protein is Glutamate--tRNA ligase.